The primary structure comprises 627 residues: Nuclear receptor subfamily 4 group A member 3 (627 aa).

Positions 1 to 112 (MPCVQAQYSP…HHHHHHHHHQ (112 aa)) are activation function (AF)-1 domain. The segment at 1 to 139 (MPCVQAQYSP…PSTSMYFKQS (139 aa)) is required for DNA-PK heterotrimer. The segment at 1–292 (MPCVQAQYSP…NRSSSSGEGT (292 aa)) is interaction with NCOA1, NCOA2, NCOA3 and KAT2B. Disordered stretches follow at residues 96–162 (HGYH…DELP) and 268–289 (ASSL…SSSG). The segment covering 97–112 (GYHHHHHHHHHHHHHQ) has biased composition (basic residues). Residues 141-150 (PSTPTTPGFP) show a composition bias toward pro residues. Positions 269-288 (SSLLGESPSLPSPPNRSSSS) are enriched in low complexity. Residues 290–365 (EGTCAVCGDN…VGMVKEVVRT (76 aa)) constitute a DNA-binding region (nuclear receptor). 2 NR C4-type zinc fingers span residues 293 to 313 (CAVC…CEGC) and 329 to 353 (CLAN…FQKC). The tract at residues 365-395 (TDSLKGRRGRLPSKPKSPLQQEPSQPSPPSP) is disordered. A compositionally biased stretch (low complexity) spans 378-388 (KPKSPLQQEPS). The interval 380–627 (KSPLQQEPSQ…DKLFLDTLPF (248 aa)) is interaction with KAT2B. The NR LBD domain occupies 395 to 624 (PPICMMNALV…SVIDKLFLDT (230 aa)).

The protein belongs to the nuclear hormone receptor family. NR4 subfamily. As to quaternary structure, interacts with SIX3 (via homeobox); differentially regulates the transcriptional activities of NR4A3. Interacts with NCOA2; potentiates the activity of the NR4A3. Interacts with NCOA1, NCOA3, MED1 and KAT2B. Interacts with EP300 and NCOA2; mediates the recruitment of MED1 in the coactivator complex. Interacts with the constituents of DNA-PK heterotrimer PRKDC, XRCC6 and XRCC5; phosphorylates and prevents NR4A3 ubiquitinylation and degradation. Interacts with NR3C1 (via nuclear receptor DNA-binding domain); the interactions represses transcription activity of NR4A3 on the POMC promoter Nur response element (NurRE). Interacts with TRIM28; the interactions potentiates NR4A3 activity on NurRE promoter. Binds DNA as a monomer and homodimer. Interacts with PARP1; activates PARP1 by improving acetylation of PARP1 and suppressing the interaction between PARP1 and SIRT1. In terms of processing, phosphorylated by PRKDC. As to expression, ubiquitous. Highest levels of expression in brain. Widely expressed throughout the arcuate nucleus region of the hypothalamus, namely in AgRP neurons.

It is found in the nucleus. In terms of biological role, transcriptional activator that binds to regulatory elements in promoter regions in a cell- and response element (target)-specific manner. Induces gene expression by binding as monomers to the NR4A1 response element (NBRE) 5'-AAAAGGTCA-3' site and as homodimers to the Nur response element (NurRE) site in the promoter of their regulated target genes. Plays a role in the regulation of proliferation, survival and differentiation of many different cell types and also in metabolism and inflammation. Mediates proliferation of vascular smooth muscle, myeloid progenitor cell and type B pancreatic cells; promotes mitogen-induced vascular smooth muscle cell proliferation through transactivation of SKP2 promoter by binding a NBRE site. Upon PDGF stimulation, stimulates vascular smooth muscle cell proliferation by regulating CCND1 and CCND2 expression. In islets, induces type B pancreatic cell proliferation through up-regulation of genes that activate cell cycle, as well as genes that cause degradation of the CDKN1A. Negatively regulates myeloid progenitor cell proliferation by repressing RUNX1 in a NBRE site-independent manner. During inner ear, plays a role as a key mediator of the proliferative growth phase of semicircular canal development. Also mediates survival of neuron and smooth muscle cells; mediates CREB-induced neuronal survival, and during hippocampus development, plays a critical role in pyramidal cell survival and axonal guidance. Is required for S phase entry of the cell cycle and survival of smooth muscle cells by inducing CCND1, resulting in RB1 phosphorylation. Binds to NBRE motif in CCND1 promoter, resulting in the activation of the promoter and CCND1 transcription. Also plays a role in inflammation; upon TNF stimulation, mediates monocyte adhesion by inducing the expression of VCAM1 and ICAM1 by binding to the NBRE consensus site. In mast cells activated by Fc-epsilon receptor cross-linking, promotes the synthesis and release of cytokines but impairs events leading to degranulation. Also plays a role in metabolism; by modulating feeding behavior; and by playing a role in energy balance by inhibiting the glucocorticoid-induced orexigenic neuropeptides AGRP expression, at least in part by forming a complex with activated NR3C1 on the AGRP- glucocorticoid response element (GRE), and thus weakening the DNA binding activity of NR3C1. Upon catecholamines stimulation, regulates gene expression that controls oxidative metabolism in skeletal muscle. Plays a role in glucose transport by regulating translocation of the SLC2A4 glucose transporter to the cell surface. Finally, during gastrulation plays a crucial role in the formation of anterior mesoderm by controlling cell migration. Inhibits adipogenesis. Also participates in cardiac hypertrophy by activating PARP1. This is Nuclear receptor subfamily 4 group A member 3 (Nr4a3) from Mus musculus (Mouse).